Reading from the N-terminus, the 311-residue chain is Protoheme IX farnesyltransferase (311 aa).

Helical transmembrane passes span 33-53 (VVML…PSPA), 55-75 (LWLL…AAAV), 104-124 (NALL…SSFI), 127-147 (LTAW…TLFL), 155-175 (IVIG…AVTG), 181-201 (GLLL…ALAL), 228-248 (IVLY…TRMM), 252-272 (YLVG…KLLV), and 287-307 (IIYL…FPIP).

It belongs to the UbiA prenyltransferase family. Protoheme IX farnesyltransferase subfamily.

It localises to the cell inner membrane. It catalyses the reaction heme b + (2E,6E)-farnesyl diphosphate + H2O = Fe(II)-heme o + diphosphate. The protein operates within porphyrin-containing compound metabolism; heme O biosynthesis; heme O from protoheme: step 1/1. Its function is as follows. Converts heme B (protoheme IX) to heme O by substitution of the vinyl group on carbon 2 of heme B porphyrin ring with a hydroxyethyl farnesyl side group. This is Protoheme IX farnesyltransferase from Teredinibacter turnerae (strain ATCC 39867 / T7901).